The sequence spans 548 residues: MTTTPIANHPNIFTHQSSSSPLAFLNRTSFIPFSSISKRNSVNCNGWRTRCSVAKDYTVPSSAVDGGPAAELDCVIVGAGISGLCIAQVMSANYPNLMVTEARDRAGGNITTVERDGYLWEEGPNSFQPSDPMLTMAVDCGLKDDLVLGDPNAPRFVLWKGKLRPVPSKLTDLAFFDLMSIPGKLRAGFGAIGLRPSPPGHEESVEQFVRRNLGGEVFERLIEPFCSGVYAGDPSKLSMKAAFGKVWKLEETGGSIIGGTFKAIKERSSTPKAPRDPRLPKPKGQTVGSFRKGLRMLPDAISARLGSKLKLSWKLSSITKSEKGGYHLTYETPEGVVSLQSRSIVMTVPSYVASNILRPLSVAAADALSNFYYPPVGAVTITYPQEAIRDERLVDGELKGFGQLHPRTQGVETLGTIYSSSLFPNRAPKGRVLLLNYIGGAKNPEILSKTESQLVEVVDRDLRKMLIKPKAQDPLVVGVRVWPQAIPQFLVGHLDTLSTAKAAMNDNGLEGLFLGGNYVSGVALGRCVEGAYEVASEVTGFLSRYAYK.

The transit peptide at 1-50 (MTTTPIANHPNIFTHQSSSSPLAFLNRTSFIPFSSISKRNSVNCNGWRTR) directs the protein to the chloroplast. FAD is bound by residues 78–83 (GAGISG), 101–102 (EA), and 123–126 (GPNS). Over residues 265 to 279 (KERSSTPKAPRDPRL) the composition is skewed to basic and acidic residues. A disordered region spans residues 265 to 287 (KERSSTPKAPRDPRLPKPKGQTV). 522-524 (VAL) contributes to the FAD binding site.

This sequence belongs to the protoporphyrinogen/coproporphyrinogen oxidase family. Protoporphyrinogen oxidase subfamily. In terms of assembly, homodimer. It depends on FAD as a cofactor.

It localises to the plastid. Its subcellular location is the chloroplast. The catalysed reaction is protoporphyrinogen IX + 3 O2 = protoporphyrin IX + 3 H2O2. The protein operates within porphyrin-containing compound metabolism; protoporphyrin-IX biosynthesis; protoporphyrin-IX from protoporphyrinogen-IX: step 1/1. It functions in the pathway porphyrin-containing compound metabolism; chlorophyll biosynthesis. Its function is as follows. Catalyzes the 6-electron oxidation of protoporphyrinogen-IX to form protoporphyrin-IX. In Nicotiana tabacum (Common tobacco), this protein is Protoporphyrinogen oxidase, chloroplastic (PPXI).